The primary structure comprises 103 residues: Cobalt transport protein CbiN (103 aa).

Helical transmembrane passes span 6 to 26 and 68 to 88; these read VLTN…PFFV and LLFA…LGYL.

This sequence belongs to the CbiN family. In terms of assembly, forms an energy-coupling factor (ECF) transporter complex composed of an ATP-binding protein (A component, CbiO), a transmembrane protein (T component, CbiQ) and 2 possible substrate-capture proteins (S components, CbiM and CbiN) of unknown stoichimetry.

Its subcellular location is the cell membrane. It functions in the pathway cofactor biosynthesis; adenosylcobalamin biosynthesis. Part of the energy-coupling factor (ECF) transporter complex CbiMNOQ involved in cobalt import. The sequence is that of Cobalt transport protein CbiN from Clostridium perfringens (strain 13 / Type A).